Consider the following 226-residue polypeptide: NADH-ubiquinone oxidoreductase 19.3 kDa subunit, mitochondrial (226 aa).

Residues 40-68 (ATGAVAPAGAQHGIARRERREVPLPSQEG) form a disordered region. The [4Fe-4S] cluster site is built by Cys-101, Cys-102, Cys-166, and Cys-196.

It belongs to the complex I 20 kDa subunit family. Complex I is composed of about 40 different subunits. This is a component of the iron-sulfur (IP) fragment of the enzyme. It depends on [4Fe-4S] cluster as a cofactor.

It localises to the mitochondrion. The enzyme catalyses a ubiquinone + NADH + 5 H(+)(in) = a ubiquinol + NAD(+) + 4 H(+)(out). Its function is as follows. Core subunit of the mitochondrial membrane respiratory chain NADH dehydrogenase (Complex I) that is believed to belong to the minimal assembly required for catalysis. Complex I functions in the transfer of electrons from NADH to the respiratory chain. The immediate electron acceptor for the enzyme is believed to be ubiquinone. This chain is NADH-ubiquinone oxidoreductase 19.3 kDa subunit, mitochondrial, found in Neurospora crassa (strain ATCC 24698 / 74-OR23-1A / CBS 708.71 / DSM 1257 / FGSC 987).